Consider the following 223-residue polypeptide: Deoxyribose-phosphate aldolase (223 aa).

Asp91 functions as the Proton donor/acceptor in the catalytic mechanism. Catalysis depends on Lys153, which acts as the Schiff-base intermediate with acetaldehyde. The active-site Proton donor/acceptor is Lys182.

This sequence belongs to the DeoC/FbaB aldolase family. DeoC type 1 subfamily.

It is found in the cytoplasm. It carries out the reaction 2-deoxy-D-ribose 5-phosphate = D-glyceraldehyde 3-phosphate + acetaldehyde. The protein operates within carbohydrate degradation; 2-deoxy-D-ribose 1-phosphate degradation; D-glyceraldehyde 3-phosphate and acetaldehyde from 2-deoxy-alpha-D-ribose 1-phosphate: step 2/2. Catalyzes a reversible aldol reaction between acetaldehyde and D-glyceraldehyde 3-phosphate to generate 2-deoxy-D-ribose 5-phosphate. This Streptococcus pyogenes serotype M12 (strain MGAS2096) protein is Deoxyribose-phosphate aldolase.